The chain runs to 344 residues: Interferon gamma receptor 1-like (344 aa).

A signal peptide spans 1-22 (MSKHAVVQFGVVYALLFPGVFG). Over 23–229 (FVPSPTNVSV…QPTPETDKTG (207 aa)) the chain is Extracellular. The 79-residue stretch at 24-102 (VPSPTNVSVV…TAHDGQEKSE (79 aa)) folds into the Fibronectin type-III domain. Residues Asn29, Asn44, Asn132, and Asn189 are each glycosylated (N-linked (GlcNAc...) asparagine). Residues 230–250 (IIAALIGGATVVLFIIMGFVW) traverse the membrane as a helical segment. The Cytoplasmic portion of the chain corresponds to 251 to 344 (LLWRKWSNIP…SSDYDRPKFL (94 aa)). The tract at residues 300–344 (TEEDQSVSARDDTGADPPVVSEEGMAGEDSQGLGCSSDYDRPKFL) is disordered.

This sequence belongs to the type II cytokine receptor family. In terms of tissue distribution, highly expressed in brain. Also detected in spleen, heart, intestine, gill and kidney. In immune cell populations, detected at low levels in monocytes, peripheral blood leukocytes, splenocytes, neutrophils and mature macrophages.

Its subcellular location is the cell membrane. Its function is as follows. Receptor which shows binding specificity for the cytokine ifng1 (interferon gamma 1). In Carassius auratus (Goldfish), this protein is Interferon gamma receptor 1-like.